The primary structure comprises 156 residues: Small ribosomal subunit protein uS7 (156 aa).

This sequence belongs to the universal ribosomal protein uS7 family. Part of the 30S ribosomal subunit. Contacts proteins S9 and S11.

Its function is as follows. One of the primary rRNA binding proteins, it binds directly to 16S rRNA where it nucleates assembly of the head domain of the 30S subunit. Is located at the subunit interface close to the decoding center, probably blocks exit of the E-site tRNA. This Clostridium tetani (strain Massachusetts / E88) protein is Small ribosomal subunit protein uS7.